The chain runs to 268 residues: tRNA pseudouridine synthase A (268 aa).

Aspartate 52 acts as the Nucleophile in catalysis. Tyrosine 113 contacts substrate.

This sequence belongs to the tRNA pseudouridine synthase TruA family. As to quaternary structure, homodimer.

It carries out the reaction uridine(38/39/40) in tRNA = pseudouridine(38/39/40) in tRNA. In terms of biological role, formation of pseudouridine at positions 38, 39 and 40 in the anticodon stem and loop of transfer RNAs. This chain is tRNA pseudouridine synthase A, found in Chlamydia abortus (strain DSM 27085 / S26/3) (Chlamydophila abortus).